The sequence spans 166 residues: NAD(P)H-quinone oxidoreductase subunit I, chloroplastic (166 aa).

4Fe-4S ferredoxin-type domains are found at residues 55–84 (GRIH…VDWK) and 95–124 (LNYS…MTEE). Positions 64, 67, 70, 74, 104, 107, 110, and 114 each coordinate [4Fe-4S] cluster.

It belongs to the complex I 23 kDa subunit family. As to quaternary structure, NDH is composed of at least 16 different subunits, 5 of which are encoded in the nucleus. The cofactor is [4Fe-4S] cluster.

Its subcellular location is the plastid. It localises to the chloroplast thylakoid membrane. It catalyses the reaction a plastoquinone + NADH + (n+1) H(+)(in) = a plastoquinol + NAD(+) + n H(+)(out). It carries out the reaction a plastoquinone + NADPH + (n+1) H(+)(in) = a plastoquinol + NADP(+) + n H(+)(out). Its function is as follows. NDH shuttles electrons from NAD(P)H:plastoquinone, via FMN and iron-sulfur (Fe-S) centers, to quinones in the photosynthetic chain and possibly in a chloroplast respiratory chain. The immediate electron acceptor for the enzyme in this species is believed to be plastoquinone. Couples the redox reaction to proton translocation, and thus conserves the redox energy in a proton gradient. The chain is NAD(P)H-quinone oxidoreductase subunit I, chloroplastic from Chamaechaenactis scaposa (Fullstem).